The sequence spans 749 residues: Putative Xaa-Pro aminopeptidase FRA1 (749 aa).

Residues 1 to 33 (MTSKPSTSDGRAHSISHVPGTHMRGTSASHSPR) are disordered. Phosphoserine is present on residues serine 69, serine 92, and serine 95. Aspartate 551, aspartate 562, glutamate 660, and glutamate 674 together coordinate Mn(2+).

The protein belongs to the peptidase M24B family. Homodimer. Interacts with FRA2. The cofactor is Mn(2+).

It localises to the cytoplasm. The enzyme catalyses Release of any N-terminal amino acid, including proline, that is linked to proline, even from a dipeptide or tripeptide.. Involved in the regulation of the iron regulon in responss to decreased mitochondrial iron-sulfur cluster synthesis. This chain is Putative Xaa-Pro aminopeptidase FRA1 (FRA1), found in Saccharomyces cerevisiae (strain ATCC 204508 / S288c) (Baker's yeast).